The chain runs to 274 residues: Large ribosomal subunit protein uL2 (274 aa).

The disordered stretch occupies residues 224–259 (AMNPVDHPHGGGEGRTSGGRHPVTPWGIPTKGYKTR).

The protein belongs to the universal ribosomal protein uL2 family. In terms of assembly, part of the 50S ribosomal subunit. Forms a bridge to the 30S subunit in the 70S ribosome.

One of the primary rRNA binding proteins. Required for association of the 30S and 50S subunits to form the 70S ribosome, for tRNA binding and peptide bond formation. It has been suggested to have peptidyltransferase activity; this is somewhat controversial. Makes several contacts with the 16S rRNA in the 70S ribosome. This Geobacter sp. (strain M21) protein is Large ribosomal subunit protein uL2.